The following is a 174-amino-acid chain: RNA pyrophosphohydrolase (174 aa).

The 140-residue stretch at 6-145 (GYRPNVGMII…KRRVYWQALQ (140 aa)) folds into the Nudix hydrolase domain. Positions 38–59 (GGIDYAETPEQAMFRELEEEVG) match the Nudix box motif.

This sequence belongs to the Nudix hydrolase family. RppH subfamily. A divalent metal cation is required as a cofactor.

Its function is as follows. Accelerates the degradation of transcripts by removing pyrophosphate from the 5'-end of triphosphorylated RNA, leading to a more labile monophosphorylated state that can stimulate subsequent ribonuclease cleavage. This chain is RNA pyrophosphohydrolase, found in Acidithiobacillus ferrooxidans (strain ATCC 53993 / BNL-5-31) (Leptospirillum ferrooxidans (ATCC 53993)).